The sequence spans 199 residues: Recombination protein RecR (199 aa).

Residues 57 to 72 (CSQCHNITDTDPCQIC) form a C4-type zinc finger. The region spanning 80–176 (TTICVVQESR…KVTRLAHGLP (97 aa)) is the Toprim domain.

It belongs to the RecR family.

Functionally, may play a role in DNA repair. It seems to be involved in an RecBC-independent recombinational process of DNA repair. It may act with RecF and RecO. This is Recombination protein RecR from Shouchella clausii (strain KSM-K16) (Alkalihalobacillus clausii).